Reading from the N-terminus, the 1121-residue chain is Phosphatidylinositol 4-kinase beta 1 (1121 aa).

In terms of domain architecture, PIK helical spans 1-143 (MPMGRFLSLV…SRIQEKCQIA (143 aa)). Residues 187-207 (PPTQKSLSFSPSPGTNVQDDG) show a composition bias toward polar residues. Positions 187 to 210 (PPTQKSLSFSPSPGTNVQDDGSQL) are disordered. 9 consecutive repeat copies span residues 212–231 (AEDNKIFKKLIPSPKVRDAL), 244–263 (SEKEGFFKRLLRDSKGEGDE), 266–285 (PNSEGFFKRLLKDNKSEDED), 288–306 (NSSEGFFKRLLSSKGESEE), 309–328 (SSSDGLFKRLLRDNKGDEEE), 331–350 (ANSDSFFKRLLRESKNEDEE), 353–372 (PNSEGFFKKLFRDSKPEDDK), 380–398 (EDKDGFLKKLFREKNDDKR), and 420–438 (DEREGFFKKFFKEKSDDKK). Residues 212-508 (AEDNKIFKKL…FRDRDQSVED (297 aa)) form an 11 X 20 AA approximate repeats (PPC) region. 4 disordered regions span residues 343–421 (ESKN…EEDE), 435–489 (DDKK…ESSP), 506–544 (VEDSELFGSKKHKEKRPGSPKQRDDTPSGKPPLPNNTAS), and 794–825 (AAAAKGEAPPGLPLKGAGQDSSDAQPRANGGM). 4 stretches are compositionally biased toward basic and acidic residues: residues 358 to 376 (FFKKLFRDSKPEDDKVPKE), 383 to 405 (DGFLKKLFREKNDDKRHGSEKNE), 412 to 421 (ADKKSGEEDE), and 435 to 445 (DDKKDIVKVDD). The span at 446–455 (GNESEGDESP) shows a compositional bias: acidic residues. Residues Ser449 and Ser454 each carry the phosphoserine modification. 2 tandem repeats follow at residues 454–472 (SPEFSLFKRLFRIHPEDAK) and 489–508 (PGTENFFRKLFRDRDQSVED). Positions 466 to 475 (IHPEDAKPTS) are enriched in basic and acidic residues. Over residues 476–489 (ENENSSNGLVESSP) the composition is skewed to polar residues. A PI3K/PI4K catalytic domain is found at 835-1106 (ELWEGKRDRI…LISSSLDAWR (272 aa)). Positions 841–847 (RDRIRKA) are G-loop. A catalytic loop region spans residues 969-977 (QVKDRHNGN). The activation loop stretch occupies residues 988–1012 (HIDFGFMLSNSPGGVNFESAPFKLT).

Belongs to the PI3/PI4-kinase family. Type III PI4K subfamily. Interacts with AHK2, CBL1 and RABA4D. Expressed constitutively in leaves, roots, flowers, and stems.

It is found in the cell membrane. The protein resides in the golgi apparatus. The protein localises to the trans-Golgi network. Its subcellular location is the cytoplasmic vesicle membrane. The enzyme catalyses a 1,2-diacyl-sn-glycero-3-phospho-(1D-myo-inositol) + ATP = a 1,2-diacyl-sn-glycero-3-phospho-(1D-myo-inositol 4-phosphate) + ADP + H(+). Stimulated by phosphatidylinositol 4-phosphate (PtdIns4P). Slightly repressed by phosphatidyl-choline (PtdCho), wortmannin and adenosine. In terms of biological role, acts on phosphatidylinositol (PtdIns) in the first committed step in the production of the second messenger inositol-1,4,5-trisphosphate. Necessary for proper organization of the trans-Golgi network (TGN) and post-Golgi secretion in root hairs. Together with PI4KB2, required during polarized root hair expansion and pollen tube elongation. Functions redundantly with PI4KB2 upstream of the cold response phosphoinositide-dependent phospholipase C (PI-PLC) pathway. In Arabidopsis thaliana (Mouse-ear cress), this protein is Phosphatidylinositol 4-kinase beta 1.